The sequence spans 163 residues: MAVLDILTIPDERLKRKAQPVKDIEAIQGFIDDLIETMYHTDDGIGLASTQVGSTDAVIVIDLSETRDQPLVLVNPEIVEKSGEYVGEEGCLSIPGYRAKVTRFEKVKVTALDRQGKAIEIETDDFLAIVLQHEIDHLHGKVFIEHLSTLKQQIALKKVRKYA.

Fe cation-binding residues include C91 and H133. E134 is a catalytic residue. H137 lines the Fe cation pocket.

It belongs to the polypeptide deformylase family. Fe(2+) serves as cofactor.

The enzyme catalyses N-terminal N-formyl-L-methionyl-[peptide] + H2O = N-terminal L-methionyl-[peptide] + formate. Removes the formyl group from the N-terminal Met of newly synthesized proteins. Requires at least a dipeptide for an efficient rate of reaction. N-terminal L-methionine is a prerequisite for activity but the enzyme has broad specificity at other positions. This chain is Peptide deformylase 3, found in Shewanella oneidensis (strain ATCC 700550 / JCM 31522 / CIP 106686 / LMG 19005 / NCIMB 14063 / MR-1).